The following is a 523-amino-acid chain: GMP synthase [glutamine-hydrolyzing] (523 aa).

A Glutamine amidotransferase type-1 domain is found at lysine 8–asparagine 205. Cysteine 85 serves as the catalytic Nucleophile. Catalysis depends on residues histidine 179 and glutamate 181. A GMPS ATP-PPase domain is found at tryptophan 206–arginine 398. Residue serine 233–serine 239 participates in ATP binding.

As to quaternary structure, homodimer.

The enzyme catalyses XMP + L-glutamine + ATP + H2O = GMP + L-glutamate + AMP + diphosphate + 2 H(+). The protein operates within purine metabolism; GMP biosynthesis; GMP from XMP (L-Gln route): step 1/1. Its function is as follows. Catalyzes the synthesis of GMP from XMP. The chain is GMP synthase [glutamine-hydrolyzing] from Histophilus somni (strain 2336) (Haemophilus somnus).